An 86-amino-acid polypeptide reads, in one-letter code: Large ribosomal subunit protein bL31B (86 aa).

This sequence belongs to the bacterial ribosomal protein bL31 family. Type B subfamily. Part of the 50S ribosomal subunit.

This is Large ribosomal subunit protein bL31B from Salmonella agona (strain SL483).